A 148-amino-acid polypeptide reads, in one-letter code: MKRVLVIHGPNVNLTGKREKEVYGEITFEEINNMIKREAAKLDIAVKIQQSNSEGEIINLIHSAENNFDAIIINPAAYTHYSLAIMDAIASVSVPVIEVHISNIFGREEFRKVSVTASRCKGVITGFGPYSYILALYAVKFLEDSIGG.

The active-site Proton acceptor is Tyr-23. Positions 74, 80, and 87 each coordinate substrate. The active-site Proton donor is the His-100. Residues 101-102 (IS) and Arg-111 each bind substrate.

It belongs to the type-II 3-dehydroquinase family. In terms of assembly, homododecamer.

The enzyme catalyses 3-dehydroquinate = 3-dehydroshikimate + H2O. The protein operates within metabolic intermediate biosynthesis; chorismate biosynthesis; chorismate from D-erythrose 4-phosphate and phosphoenolpyruvate: step 3/7. Functionally, catalyzes a trans-dehydration via an enolate intermediate. The protein is 3-dehydroquinate dehydratase of Caldanaerobacter subterraneus subsp. tengcongensis (strain DSM 15242 / JCM 11007 / NBRC 100824 / MB4) (Thermoanaerobacter tengcongensis).